The chain runs to 368 residues: Type 2 DNA topoisomerase 6 subunit A (368 aa).

Positions 9–148 constitute a Topo IIA-type catalytic domain; sequence TEDEIARERL…FHMRPEESGA (140 aa). The O-(5'-phospho-DNA)-tyrosine intermediate role is filled by Tyr-103. 2 residues coordinate Mg(2+): Glu-201 and Asp-253.

The protein belongs to the TOP6A family. As to quaternary structure, homodimer. Heterotetramer of two Top6A and two Top6B chains. It depends on Mg(2+) as a cofactor.

It carries out the reaction ATP-dependent breakage, passage and rejoining of double-stranded DNA.. Its function is as follows. Relaxes both positive and negative superturns and exhibits a strong decatenase activity. The polypeptide is Type 2 DNA topoisomerase 6 subunit A (Natronomonas pharaonis (strain ATCC 35678 / DSM 2160 / CIP 103997 / JCM 8858 / NBRC 14720 / NCIMB 2260 / Gabara) (Halobacterium pharaonis)).